A 37-amino-acid chain; its full sequence is MKVKPSVKRICNKCRVIRRHGRVMVICADPRHKQRQG.

It belongs to the bacterial ribosomal protein bL36 family.

The protein is Large ribosomal subunit protein bL36 of Salinispora tropica (strain ATCC BAA-916 / DSM 44818 / JCM 13857 / NBRC 105044 / CNB-440).